We begin with the raw amino-acid sequence, 140 residues long: NADPH-dependent 7-cyano-7-deazaguanine reductase (140 aa).

Catalysis depends on Cys51, which acts as the Thioimide intermediate. Catalysis depends on Asp58, which acts as the Proton donor. Substrate-binding positions include 73-75 (LES) and 92-93 (HE).

The protein belongs to the GTP cyclohydrolase I family. QueF type 1 subfamily.

Its subcellular location is the cytoplasm. It catalyses the reaction 7-aminomethyl-7-carbaguanine + 2 NADP(+) = 7-cyano-7-deazaguanine + 2 NADPH + 3 H(+). The protein operates within tRNA modification; tRNA-queuosine biosynthesis. Functionally, catalyzes the NADPH-dependent reduction of 7-cyano-7-deazaguanine (preQ0) to 7-aminomethyl-7-deazaguanine (preQ1). The sequence is that of NADPH-dependent 7-cyano-7-deazaguanine reductase from Syntrophus aciditrophicus (strain SB).